The sequence spans 211 residues: Thymidylate kinase (211 aa).

10–17 (GGDGVGKS) contacts ATP.

This sequence belongs to the thymidylate kinase family.

The enzyme catalyses dTMP + ATP = dTDP + ADP. Phosphorylation of dTMP to form dTDP in both de novo and salvage pathways of dTTP synthesis. The polypeptide is Thymidylate kinase (Clavibacter michiganensis subsp. michiganensis (strain NCPPB 382)).